A 428-amino-acid chain; its full sequence is UPF0229 protein YeaH (428 aa).

A compositionally biased stretch (basic and acidic residues) spans 78–90 (GNDHFIQNDRIER). A disordered region spans residues 78–111 (GNDHFIQNDRIERPQGGGGGGSGSGQGQASQDGE). Positions 92–103 (QGGGGGGSGSGQ) are enriched in gly residues.

The protein belongs to the UPF0229 family.

The protein is UPF0229 protein YeaH of Salmonella choleraesuis (strain SC-B67).